A 116-amino-acid polypeptide reads, in one-letter code: Putative serine proteinase inhibitor 2 homolog first part (116 aa).

It belongs to the serpin family. Poxviruses subfamily.

The protein is Putative serine proteinase inhibitor 2 homolog first part of Vaccinia virus (strain Copenhagen) (VACV).